The primary structure comprises 240 residues: ATP-dependent dethiobiotin synthetase BioD 1 (240 aa).

Residue 13 to 18 (DVGKTV) participates in ATP binding. Threonine 17 contacts Mg(2+). Residue lysine 38 is part of the active site. Substrate is bound at residue serine 42. ATP contacts are provided by residues aspartate 55, 116-119 (EGAG), 176-177 (NE), 205-207 (PYL), and glutamate 212. Mg(2+)-binding residues include aspartate 55 and glutamate 116.

This sequence belongs to the dethiobiotin synthetase family. In terms of assembly, homodimer. Mg(2+) is required as a cofactor.

It is found in the cytoplasm. The enzyme catalyses (7R,8S)-7,8-diammoniononanoate + CO2 + ATP = (4R,5S)-dethiobiotin + ADP + phosphate + 3 H(+). The protein operates within cofactor biosynthesis; biotin biosynthesis; biotin from 7,8-diaminononanoate: step 1/2. Functionally, catalyzes a mechanistically unusual reaction, the ATP-dependent insertion of CO2 between the N7 and N8 nitrogen atoms of 7,8-diaminopelargonic acid (DAPA, also called 7,8-diammoniononanoate) to form a ureido ring. The sequence is that of ATP-dependent dethiobiotin synthetase BioD 1 from Yersinia pestis.